The following is a 122-amino-acid chain: Serum amyloid A-2 protein (122 aa).

The N-terminal stretch at 1–19 (MKLLTSLVFCSLLLGVCHG) is a signal peptide. Residues 89 to 108 (RGHEDTMADQEANRHGRSGK) are compositionally biased toward basic and acidic residues. The interval 89–122 (RGHEDTMADQEANRHGRSGKDPNYYRPPGLPAKY) is disordered.

This sequence belongs to the SAA family. In terms of assembly, apolipoprotein of the HDL complex. In terms of tissue distribution, expressed by the liver; secreted in plasma.

The protein localises to the secreted. Functionally, major acute phase reactant. The polypeptide is Serum amyloid A-2 protein (Mus musculus (Mouse)).